The primary structure comprises 295 residues: Protein SSO2 (295 aa).

Residues 1–269 (MSNANPYENN…ARKARKNKIR (269 aa)) are Cytoplasmic-facing. Phosphoserine is present on residues serine 31 and serine 34. Residues 39-100 (AFMNKINSIN…ATDLQYQLKA (62 aa)) are a coiled coil. Positions 194-256 (LAEVQARHQE…EQGVGHTNKA (63 aa)) constitute a t-SNARE coiled-coil homology domain. Residues 270–291 (CLIICFIIFAIVVVVVVVPSVV) traverse the membrane as a helical; Anchor for type IV membrane protein segment. Residues 292–295 (ETRK) are Extracellular-facing.

It belongs to the syntaxin family.

Its subcellular location is the membrane. In terms of biological role, required for vesicle fusion with the plasma membrane. The protein is Protein SSO2 (SSO2) of Saccharomyces cerevisiae (strain ATCC 204508 / S288c) (Baker's yeast).